Here is a 154-residue protein sequence, read N- to C-terminus: Lipoprotein signal peptidase (154 aa).

2 helical membrane-spanning segments follow: residues 52–72 (ILAG…IGIV) and 85–105 (LGVA…DRAV). Catalysis depends on residues aspartate 111 and aspartate 129. Residues 124–144 (IFNIADSSLCVGVMLLFIQML) form a helical membrane-spanning segment.

Belongs to the peptidase A8 family.

The protein localises to the cell membrane. The enzyme catalyses Release of signal peptides from bacterial membrane prolipoproteins. Hydrolyzes -Xaa-Yaa-Zaa-|-(S,diacylglyceryl)Cys-, in which Xaa is hydrophobic (preferably Leu), and Yaa (Ala or Ser) and Zaa (Gly or Ala) have small, neutral side chains.. It participates in protein modification; lipoprotein biosynthesis (signal peptide cleavage). Its function is as follows. This protein specifically catalyzes the removal of signal peptides from prolipoproteins. The chain is Lipoprotein signal peptidase from Bacillus subtilis (strain 168).